The following is a 241-amino-acid chain: Ribosome-recycling factor, mitochondrial (241 aa).

It belongs to the RRF family.

It is found in the mitochondrion. Functionally, necessary for protein synthesis in mitochondria. Functions as a ribosome recycling factor in mitochondria. The polypeptide is Ribosome-recycling factor, mitochondrial (RRF1) (Kluyveromyces lactis (strain ATCC 8585 / CBS 2359 / DSM 70799 / NBRC 1267 / NRRL Y-1140 / WM37) (Yeast)).